A 269-amino-acid polypeptide reads, in one-letter code: RBPJ-interacting and tubulin-associated protein 1 (269 aa).

The Nuclear export signal motif lies at 5 to 17 (VELAVSGIQTLPL). 2 disordered regions span residues 37–101 (SLFG…NKYR) and 141–269 (FWTP…PPWK). The span at 62–77 (RTSGVGTGTSRASGAN) shows a compositional bias: polar residues. Residues 79-93 (SCETTSSSGSTPTLT) are compositionally biased toward low complexity. Residues 92–108 (LTPRKKNKYRLISHTPS) carry the Nuclear localization signal motif. The tract at residues 128 to 156 (WMAKGDAAKLHSLFWTPPATPRGSHSPRP) is interaction with RBPJ/RBPSUH. The segment at 156–269 (PRETPLRAIH…ATQKPKPPWK (114 aa)) is interaction with tubulin.

Belongs to the RITA family. Interacts with RBPJ/RBPSUH.

It is found in the cytoplasm. The protein localises to the nucleus. It localises to the cytoskeleton. The protein resides in the microtubule organizing center. Its subcellular location is the centrosome. Tubulin-binding protein that acts as a negative regulator of Notch signaling pathway. Shuttles between the cytoplasm and the nucleus and mediates the nuclear export of RBPJ/RBPSUH, thereby preventing the interaction between RBPJ/RBPSUH and NICD product of Notch proteins (Notch intracellular domain), leading to down-regulate Notch-mediated transcription. May play a role in neurogenesis. In Ailuropoda melanoleuca (Giant panda), this protein is RBPJ-interacting and tubulin-associated protein 1 (RITA1).